The sequence spans 387 residues: UDP-N-acetylglucosamine--N-acetylmuramyl-(pentapeptide) pyrophosphoryl-undecaprenol N-acetylglucosamine transferase (387 aa).

The disordered stretch occupies residues 1 to 22 (MSEHVRSAGPPQASTAPSGGSA). UDP-N-acetyl-alpha-D-glucosamine contacts are provided by residues 41-43 (TGG), Asn158, Arg194, Ser222, Ile276, and Gln321.

Belongs to the glycosyltransferase 28 family. MurG subfamily.

Its subcellular location is the cell inner membrane. It catalyses the reaction di-trans,octa-cis-undecaprenyl diphospho-N-acetyl-alpha-D-muramoyl-L-alanyl-D-glutamyl-meso-2,6-diaminopimeloyl-D-alanyl-D-alanine + UDP-N-acetyl-alpha-D-glucosamine = di-trans,octa-cis-undecaprenyl diphospho-[N-acetyl-alpha-D-glucosaminyl-(1-&gt;4)]-N-acetyl-alpha-D-muramoyl-L-alanyl-D-glutamyl-meso-2,6-diaminopimeloyl-D-alanyl-D-alanine + UDP + H(+). The protein operates within cell wall biogenesis; peptidoglycan biosynthesis. Functionally, cell wall formation. Catalyzes the transfer of a GlcNAc subunit on undecaprenyl-pyrophosphoryl-MurNAc-pentapeptide (lipid intermediate I) to form undecaprenyl-pyrophosphoryl-MurNAc-(pentapeptide)GlcNAc (lipid intermediate II). The chain is UDP-N-acetylglucosamine--N-acetylmuramyl-(pentapeptide) pyrophosphoryl-undecaprenol N-acetylglucosamine transferase from Polaromonas sp. (strain JS666 / ATCC BAA-500).